The chain runs to 461 residues: Phosphomethylpyrimidine synthase (461 aa).

Residues asparagine 81, methionine 110, tyrosine 140, histidine 176, 196–198 (SRG), 237–240 (DSLR), and glutamate 276 contribute to the substrate site. Zn(2+) is bound at residue histidine 280. Tyrosine 303 lines the substrate pocket. Residue histidine 344 participates in Zn(2+) binding. [4Fe-4S] cluster contacts are provided by cysteine 424, cysteine 427, and cysteine 432.

This sequence belongs to the ThiC family. [4Fe-4S] cluster serves as cofactor.

The catalysed reaction is 5-amino-1-(5-phospho-beta-D-ribosyl)imidazole + S-adenosyl-L-methionine = 4-amino-2-methyl-5-(phosphooxymethyl)pyrimidine + CO + 5'-deoxyadenosine + formate + L-methionine + 3 H(+). It participates in cofactor biosynthesis; thiamine diphosphate biosynthesis. Functionally, catalyzes the synthesis of the hydroxymethylpyrimidine phosphate (HMP-P) moiety of thiamine from aminoimidazole ribotide (AIR) in a radical S-adenosyl-L-methionine (SAM)-dependent reaction. This is Phosphomethylpyrimidine synthase from Thermosynechococcus vestitus (strain NIES-2133 / IAM M-273 / BP-1).